Here is a 540-residue protein sequence, read N- to C-terminus: 2,3-bisphosphoglycerate-independent phosphoglycerate mutase (540 aa).

Aspartate 25 and serine 75 together coordinate Mn(2+). Serine 75 (phosphoserine intermediate) is an active-site residue. Substrate-binding positions include histidine 136, 166 to 167 (RD), arginine 198, arginine 204, 269 to 272 (RPDR), and lysine 342. Mn(2+) contacts are provided by aspartate 409, histidine 413, aspartate 450, histidine 451, and histidine 468.

The protein belongs to the BPG-independent phosphoglycerate mutase family. As to quaternary structure, monomer. Mn(2+) is required as a cofactor.

The enzyme catalyses (2R)-2-phosphoglycerate = (2R)-3-phosphoglycerate. The protein operates within carbohydrate degradation; glycolysis; pyruvate from D-glyceraldehyde 3-phosphate: step 3/5. Its function is as follows. Catalyzes the interconversion of 2-phosphoglycerate and 3-phosphoglycerate. This is 2,3-bisphosphoglycerate-independent phosphoglycerate mutase from Prochlorococcus marinus subsp. pastoris (strain CCMP1986 / NIES-2087 / MED4).